We begin with the raw amino-acid sequence, 340 residues long: Beta-ketoacyl-[acyl-carrier-protein] synthase III (340 aa).

Catalysis depends on residues C119 and H260. The tract at residues 261-265 is ACP-binding; the sequence is QANYR. The active site involves N290.

This sequence belongs to the thiolase-like superfamily. FabH family. In terms of assembly, homodimer.

The protein localises to the cytoplasm. It carries out the reaction malonyl-[ACP] + acetyl-CoA + H(+) = 3-oxobutanoyl-[ACP] + CO2 + CoA. The protein operates within lipid metabolism; fatty acid biosynthesis. In terms of biological role, catalyzes the condensation reaction of fatty acid synthesis by the addition to an acyl acceptor of two carbons from malonyl-ACP. Catalyzes the first condensation reaction which initiates fatty acid synthesis and may therefore play a role in governing the total rate of fatty acid production. Possesses both acetoacetyl-ACP synthase and acetyl transacylase activities. Its substrate specificity determines the biosynthesis of branched-chain and/or straight-chain of fatty acids. This Sulfurovum sp. (strain NBC37-1) protein is Beta-ketoacyl-[acyl-carrier-protein] synthase III.